A 79-amino-acid chain; its full sequence is Small ribosomal subunit protein bS21A (79 aa).

The tract at residues 57–79 (LARKKLQREGLLPAPKKVLRPTR) is disordered.

The protein belongs to the bacterial ribosomal protein bS21 family.

This Rhizobium johnstonii (strain DSM 114642 / LMG 32736 / 3841) (Rhizobium leguminosarum bv. viciae) protein is Small ribosomal subunit protein bS21A.